A 193-amino-acid polypeptide reads, in one-letter code: Molybdopterin synthase catalytic subunit (193 aa).

Residues 118 to 119, Lys134, and 141 to 143 contribute to the substrate site; these read HR and KKE. A disordered region spans residues 159–193; that stretch reads DRTTTDGTTASSPAPATRPAKGGGCCGSKVRANES. Low complexity predominate over residues 163–178; the sequence is TDGTTASSPAPATRPA.

This sequence belongs to the MoaE family. MOCS2B subfamily. As to quaternary structure, heterotetramer; composed of 2 small (MOCS2A) and 2 large (MOCS2B) subunits.

It localises to the cytoplasm. The catalysed reaction is 2 [molybdopterin-synthase sulfur-carrier protein]-C-terminal-Gly-aminoethanethioate + cyclic pyranopterin phosphate + H2O = molybdopterin + 2 [molybdopterin-synthase sulfur-carrier protein]-C-terminal Gly-Gly + 2 H(+). It participates in cofactor biosynthesis; molybdopterin biosynthesis. Functionally, catalytic subunit of the molybdopterin synthase complex, a complex that catalyzes the conversion of precursor Z into molybdopterin. Acts by mediating the incorporation of 2 sulfur atoms from thiocarboxylated MOCS2A into precursor Z to generate a dithiolene group. The sequence is that of Molybdopterin synthase catalytic subunit from Oryza sativa subsp. indica (Rice).